Here is a 296-residue protein sequence, read N- to C-terminus: MNSLLRQGLRLGCCLPAVQQQIHTTAVHRTFWEREKKSGYKTKLPEPSKKQMIMDGLRDLKEEMKLWRQEVKEQFESDPILVFRPGETDVVFDFKAPDVLDKWTVTTDADHGEGKSTATLELSAAGAGLFHGQVNSDHTKDGIIKRTGYANIRTKRVRKSFKRETTYDWTQYNMLVMKVRGDGRSYLINLHTEGYFDLMWNDIYHYVLYTRGGPHWQIAKIPFSKFFLSSKGRVQDRQGAIPLNRVTHFGFSVAAKKGMDGPFGLEIDYVGLEYDPSHREEFAYEMYQTPKYIVAT.

The transit peptide at Met-1 to Arg-29 directs the protein to the mitochondrion.

The protein belongs to the CIA30 family. In terms of assembly, associates with mitochondrial complex I assembly intermediates during its biogenesis.

It is found in the mitochondrion. In terms of biological role, chaperone protein involved in the assembly of the mitochondrial NADH:ubiquinone oxidoreductase complex (complex I). The protein is Complex I intermediate-associated protein 30, mitochondrial of Drosophila melanogaster (Fruit fly).